We begin with the raw amino-acid sequence, 106 residues long: Large ribosomal subunit protein uL24 (106 aa).

This sequence belongs to the universal ribosomal protein uL24 family. As to quaternary structure, part of the 50S ribosomal subunit.

Functionally, one of two assembly initiator proteins, it binds directly to the 5'-end of the 23S rRNA, where it nucleates assembly of the 50S subunit. In terms of biological role, one of the proteins that surrounds the polypeptide exit tunnel on the outside of the subunit. In Rhodospirillum rubrum (strain ATCC 11170 / ATH 1.1.1 / DSM 467 / LMG 4362 / NCIMB 8255 / S1), this protein is Large ribosomal subunit protein uL24.